The chain runs to 647 residues: Threonine--tRNA ligase (647 aa).

In terms of domain architecture, TGS spans 1 to 61 (MINITFPDGA…TEDGSIEIVT (61 aa)). The segment at 242–540 (DHRKLGKELD…LIENYKGAFP (299 aa)) is catalytic. 3 residues coordinate Zn(2+): cysteine 336, histidine 387, and histidine 517.

It belongs to the class-II aminoacyl-tRNA synthetase family. As to quaternary structure, homodimer. The cofactor is Zn(2+).

It localises to the cytoplasm. The enzyme catalyses tRNA(Thr) + L-threonine + ATP = L-threonyl-tRNA(Thr) + AMP + diphosphate + H(+). Functionally, catalyzes the attachment of threonine to tRNA(Thr) in a two-step reaction: L-threonine is first activated by ATP to form Thr-AMP and then transferred to the acceptor end of tRNA(Thr). Also edits incorrectly charged L-seryl-tRNA(Thr). The chain is Threonine--tRNA ligase from Streptococcus pneumoniae serotype 2 (strain D39 / NCTC 7466).